Here is a 60-residue protein sequence, read N- to C-terminus: MAGLGVTELLIILAIVIVLFGASRIGDLGGAMGRGIREFRRGVRDEDATAPTDASKNESK.

Residues 1-21 traverse the membrane as a helical segment; sequence MAGLGVTELLIILAIVIVLFG.

This sequence belongs to the TatA/E family. Forms a complex with TatC.

It is found in the cell membrane. Its function is as follows. Part of the twin-arginine translocation (Tat) system that transports large folded proteins containing a characteristic twin-arginine motif in their signal peptide across membranes. TatA could form the protein-conducting channel of the Tat system. The polypeptide is Sec-independent protein translocase protein TatA (Herpetosiphon aurantiacus (strain ATCC 23779 / DSM 785 / 114-95)).